The chain runs to 360 residues: Homoserine O-acetyltransferase (360 aa).

Residues 41 to 344 (NAILICHALT…DYGHDAFLVD (304 aa)) enclose the AB hydrolase-1 domain. Serine 144 acts as the Nucleophile in catalysis. Position 213 (arginine 213) interacts with substrate. Residues aspartate 305 and histidine 338 contribute to the active site. Residue aspartate 339 coordinates substrate.

Belongs to the AB hydrolase superfamily. MetX family. In terms of assembly, homodimer.

Its subcellular location is the cytoplasm. It catalyses the reaction L-homoserine + acetyl-CoA = O-acetyl-L-homoserine + CoA. It participates in amino-acid biosynthesis; L-methionine biosynthesis via de novo pathway; O-acetyl-L-homoserine from L-homoserine: step 1/1. Transfers an acetyl group from acetyl-CoA to L-homoserine, forming acetyl-L-homoserine. This is Homoserine O-acetyltransferase from Pasteurella multocida (strain Pm70).